A 721-amino-acid chain; its full sequence is Polyribonucleotide nucleotidyltransferase (721 aa).

The Mg(2+) site is built by Asp-487 and Asp-493. The KH domain occupies 554 to 613 (PRIETFKIPTDKIREVIGTGGKVIREIVEKTGAKVNIDDDGTVKVASSDGESIKAAIKWI). An S1 motif domain is found at 623 to 691 (NAIYDGTVVK…DRGKTRLSMK (69 aa)). The disordered stretch occupies residues 697-721 (TGEDLEAKQKAEAEKAKAEGAPAAE). Basic and acidic residues predominate over residues 701–714 (LEAKQKAEAEKAKA).

The protein belongs to the polyribonucleotide nucleotidyltransferase family. Mg(2+) serves as cofactor.

It localises to the cytoplasm. It carries out the reaction RNA(n+1) + phosphate = RNA(n) + a ribonucleoside 5'-diphosphate. Functionally, involved in mRNA degradation. Catalyzes the phosphorolysis of single-stranded polyribonucleotides processively in the 3'- to 5'-direction. This Rhodopseudomonas palustris (strain BisA53) protein is Polyribonucleotide nucleotidyltransferase.